A 123-amino-acid polypeptide reads, in one-letter code: MQWLAIGLGAAIGACLRGWLARFNPMHHWIPLGTLGANVLGGLLIGLALVWFERVGSGLSPNIRLFVITGFLGGLTTFSTFSVEVFTFIHNGKLLAGLGLIGLHVGLTLLATALGFYFFKLVL.

The next 4 membrane-spanning stretches (helical) occupy residues 1 to 21 (MQWLAIGLGAAIGACLRGWLA), 32 to 52 (LGTLGANVLGGLLIGLALVWF), 66 to 86 (FVITGFLGGLTTFSTFSVEVF), and 99 to 119 (GLIGLHVGLTLLATALGFYFF). Na(+)-binding residues include glycine 73 and threonine 76.

It belongs to the fluoride channel Fluc/FEX (TC 1.A.43) family.

It is found in the cell inner membrane. It carries out the reaction fluoride(in) = fluoride(out). Its activity is regulated as follows. Na(+) is not transported, but it plays an essential structural role and its presence is essential for fluoride channel function. Functionally, fluoride-specific ion channel. Important for reducing fluoride concentration in the cell, thus reducing its toxicity. This is Fluoride-specific ion channel FluC from Psychrobacter cryohalolentis (strain ATCC BAA-1226 / DSM 17306 / VKM B-2378 / K5).